A 168-amino-acid polypeptide reads, in one-letter code: G/U mismatch-specific DNA glycosylase (168 aa).

This sequence belongs to the uracil-DNA glycosylase (UDG) superfamily. TDG/mug family. In terms of assembly, binds DNA as a monomer.

The protein localises to the cytoplasm. The catalysed reaction is Specifically hydrolyzes mismatched double-stranded DNA and polynucleotides, releasing free uracil.. Functionally, excises ethenocytosine and uracil, which can arise by alkylation or deamination of cytosine, respectively, from the corresponding mispairs with guanine in ds-DNA. It is capable of hydrolyzing the carbon-nitrogen bond between the sugar-phosphate backbone of the DNA and the mispaired base. The complementary strand guanine functions in substrate recognition. Required for DNA damage lesion repair in stationary-phase cells. The chain is G/U mismatch-specific DNA glycosylase from Escherichia coli (strain SMS-3-5 / SECEC).